Consider the following 397-residue polypeptide: Na(+)/H(+) antiporter NhaA 1 (397 aa).

Helical transmembrane passes span 15–35 (FQLE…ALII), 42–62 (YLYG…LNIA), 65–85 (LLLW…GLEV), 101–121 (ILPA…YWFI), 129–149 (VAGW…VLAL), 160–180 (LFLM…IALF), 183–203 (GTLS…LVAM), 219–241 (LILW…ALAF), 265–285 (WVAY…SLAG), 299–319 (ITIG…WVAV), 335–355 (ILGV…VGSL), and 370–390 (MGIL…TAMA).

It belongs to the NhaA Na(+)/H(+) (TC 2.A.33) antiporter family.

It localises to the cell inner membrane. The enzyme catalyses Na(+)(in) + 2 H(+)(out) = Na(+)(out) + 2 H(+)(in). In terms of biological role, na(+)/H(+) antiporter that extrudes sodium in exchange for external protons. This chain is Na(+)/H(+) antiporter NhaA 1, found in Pseudomonas putida (strain ATCC 47054 / DSM 6125 / CFBP 8728 / NCIMB 11950 / KT2440).